The sequence spans 1022 residues: GPI ethanolamine phosphate transferase 1 (1022 aa).

The Cytoplasmic segment spans residues 1-6 (MARVGR). The helical transmembrane segment at 7 to 27 (VGFLTLAVVFHLMYAYSIFDI) threads the bilayer. Residues 28-466 (YFVSPIVSGM…LQTYDWLFLR (439 aa)) lie on the Lumenal side of the membrane. N148 and N433 each carry an N-linked (GlcNAc...) asparagine glycan. A helical membrane pass occupies residues 467-487 (TIVSLGYLGWIAYALTTVIDL). Residues 488–498 (HVLHGKSESNR) lie on the Cytoplasmic side of the membrane. Residues 499–519 (TTFSIMFFSSILVALFSVLLY) traverse the membrane as a helical segment. Topologically, residues 520 to 560 (QGSSWRYYLYALFPIFFWEEVFARRKALLAGREILLGHVHS) are lumenal. A helical transmembrane segment spans residues 561–581 (VSGYFAFAIQLLLYVGVLEAL). Topologically, residues 582–589 (VQSYFHRD) are cytoplasmic. The chain crosses the membrane as a helical span at residues 590–610 (IFTVCFILGGFWPITYGTKFL). Residues 611–614 (GQHK) are Lumenal-facing. A helical membrane pass occupies residues 615–635 (LLSASWALGCFLMSIFTLLPA). Over 636 to 640 (NKVED) the chain is Cytoplasmic. Residues 641–661 (MMMISCGSLLMFLTGLLYLIF) form a helical membrane-spanning segment. Over 662-685 (ERSILGQKRSSDPNSVVSSCGSRT) the chain is Lumenal. The chain crosses the membrane as a helical span at residues 686–706 (IMGAQVGMILLALIVTRSSVA). The Cytoplasmic portion of the chain corresponds to 707–713 (SLQAKQG). A helical transmembrane segment spans residues 714–734 (LPLGNQVLGWAILVSSLLLPF). The Lumenal portion of the chain corresponds to 735-749 (LHRLYPNSHYLHRLM). 2 helical membrane-spanning segments follow: residues 750–770 (VIFLTFSPIFIILTISYEGLF) and 771–791 (YFVFCMTLLAWVRLEQAIYIH). The Lumenal segment spans residues 792 to 837 (TTAPTREQDHSVANGSLPAKKPSPGNTVVVEGQPYRYRTLSVSDAR). N805 carries N-linked (GlcNAc...) asparagine glycosylation. The chain crosses the membrane as a helical span at residues 838–858 (VALFFFFLLQSGFFSTGNIAS). The Cytoplasmic portion of the chain corresponds to 859–880 (VSSFSLDSVYRLIPIFNPFAQG). The helical transmembrane segment at 881-901 (ALLILKLLIPFAIISANLGIL) threads the bilayer. Topologically, residues 902-910 (NHRLEVAPS) are lumenal. The helical transmembrane segment at 911-931 (ALFMVVMSISDVMTLNFFYMV) threads the bilayer. Residues 932-947 (RDEGSWLEIGTTISHF) are Cytoplasmic-facing. The helical transmembrane segment at 948–968 (CIASFLCTFVAVLEFLSELFI) threads the bilayer. Topologically, residues 969–1022 (SGVDFGHPATTVGSAVAKAVNGSVACGHSPDSDISGEDSTSVGITAKADPDARS) are lumenal. The N-linked (GlcNAc...) asparagine glycan is linked to N989. The interval 998–1022 (PDSDISGEDSTSVGITAKADPDARS) is disordered.

The protein belongs to the PIGG/PIGN/PIGO family. PIGN subfamily.

Its subcellular location is the endoplasmic reticulum membrane. It functions in the pathway glycolipid biosynthesis; glycosylphosphatidylinositol-anchor biosynthesis. In terms of biological role, ethanolamine phosphate transferase involved in glycosylphosphatidylinositol-anchor biosynthesis. Transfers ethanolamine phosphate to the first alpha-1,4-linked mannose of the glycosylphosphatidylinositol precursor of GPI-anchor. The sequence is that of GPI ethanolamine phosphate transferase 1 (mcd4) from Aspergillus oryzae (strain ATCC 42149 / RIB 40) (Yellow koji mold).